The sequence spans 295 residues: Putative clathrin assembly protein At5g65370 (295 aa).

In terms of domain architecture, ENTH spans 26 to 169; sequence CSSVNAKTID…SIAEVLGITP (144 aa).

Its subcellular location is the membrane. The protein resides in the clathrin-coated pit. It localises to the golgi apparatus. It is found in the cytoplasmic vesicle. The protein localises to the clathrin-coated vesicle. The sequence is that of Putative clathrin assembly protein At5g65370 from Arabidopsis thaliana (Mouse-ear cress).